The following is a 131-amino-acid chain: L-ectoine synthase (131 aa).

This sequence belongs to the ectoine synthase family.

The enzyme catalyses (2S)-4-acetamido-2-aminobutanoate = L-ectoine + H2O. It participates in amine and polyamine biosynthesis; ectoine biosynthesis; L-ectoine from L-aspartate 4-semialdehyde: step 3/3. Its function is as follows. Catalyzes the circularization of gamma-N-acetyl-alpha,gamma-diaminobutyric acid (ADABA) to ectoine (1,4,5,6-tetrahydro-2-methyl-4-pyrimidine carboxylic acid), which is an excellent osmoprotectant. The chain is L-ectoine synthase from Bordetella bronchiseptica (strain ATCC BAA-588 / NCTC 13252 / RB50) (Alcaligenes bronchisepticus).